We begin with the raw amino-acid sequence, 467 residues long: NADH-quinone oxidoreductase subunit N 2 (467 aa).

The next 13 membrane-spanning stretches (helical) occupy residues 1-21, 31-51, 66-86, 99-119, 153-173, 195-215, 231-253, 258-280, 287-307, 315-335, 357-377, 394-414, and 434-454; these read MSIF…ALFV, VASW…FALG, LSQF…GIAA, FMLL…VELI, ILFG…IIAA, AVIG…LFPF, AAYV…AAFV, EVTT…AALV, LLGF…AAGS, AFYS…VCAI, LAMI…TAGF, WLVI…LSMV, and LIFG…PAPL.

Belongs to the complex I subunit 2 family. NDH-1 is composed of 14 different subunits. Subunits NuoA, H, J, K, L, M, N constitute the membrane sector of the complex.

It localises to the cell inner membrane. The enzyme catalyses a quinone + NADH + 5 H(+)(in) = a quinol + NAD(+) + 4 H(+)(out). Its function is as follows. NDH-1 shuttles electrons from NADH, via FMN and iron-sulfur (Fe-S) centers, to quinones in the respiratory chain. The immediate electron acceptor for the enzyme in this species is believed to be ubiquinone. Couples the redox reaction to proton translocation (for every two electrons transferred, four hydrogen ions are translocated across the cytoplasmic membrane), and thus conserves the redox energy in a proton gradient. This chain is NADH-quinone oxidoreductase subunit N 2, found in Solidesulfovibrio magneticus (strain ATCC 700980 / DSM 13731 / RS-1) (Desulfovibrio magneticus).